We begin with the raw amino-acid sequence, 617 residues long: V-type proton ATPase catalytic subunit A (617 aa).

Position 250–257 (250–257 (GAFGCGKT)) interacts with ATP.

This sequence belongs to the ATPase alpha/beta chains family. V-ATPase is a heteromultimeric enzyme made up of two complexes: the ATP-hydrolytic V1 complex and the proton translocation V0 complex. The V1 complex consists of three catalytic AB heterodimers that form a heterohexamer, three peripheral stalks each consisting of EG heterodimers, one central rotor including subunits D and F, and the regulatory subunits C and H. The proton translocation complex V0 consists of the proton transport subunit a, a ring of proteolipid subunits c9c'', rotary subunit d, subunits e and f, and the accessory subunits VhaAC45 and ATP6AP2.

The enzyme catalyses ATP + H2O + 4 H(+)(in) = ADP + phosphate + 5 H(+)(out). Its activity is regulated as follows. ATP hydrolysis occurs at the interface between the nucleotide-binding domains of subunits A and B. ATP hydrolysis triggers a conformational change in the subunits D and F, which induces a shift of subunit d. The c-ring is subsequently rotated and results in a continuous proton translocation across the membrane. Catalytic subunit of the V1 complex of vacuolar(H+)-ATPase (V-ATPase), a multisubunit enzyme composed of a peripheral complex (V1) that hydrolyzes ATP and a membrane integral complex (V0) that translocates protons. V-ATPase is responsible for acidifying and maintaining the pH of intracellular compartments and in some cell types, is targeted to the plasma membrane, where it is responsible for acidifying the extracellular environment. This Manduca sexta (Tobacco hawkmoth) protein is V-type proton ATPase catalytic subunit A (VHAA).